Consider the following 69-residue polypeptide: Conotoxin Lt5.7 (69 aa).

The signal sequence occupies residues 1–19 (MLCLPVFIILLLLASPAAP). Residues 20-54 (KSLETRIQNDLIRAGLTDADLKTEKGFLSGLLNVA) constitute a propeptide that is removed on maturation.

The protein belongs to the conotoxin T superfamily. Contains 2 disulfide bonds that can be either 'C1-C3, C2-C4' or 'C1-C4, C2-C3', since these disulfide connectivities have been observed for conotoxins with cysteine framework V (for examples, see AC P0DQQ7 and AC P81755). In terms of tissue distribution, expressed by the venom duct.

Its subcellular location is the secreted. In Conus litteratus (Lettered cone), this protein is Conotoxin Lt5.7.